A 301-amino-acid chain; its full sequence is Phospholipase A1 VesT1.02 (301 aa).

Cystine bridges form between cysteine 87–cysteine 294, cysteine 176–cysteine 245, cysteine 181–cysteine 262, cysteine 219–cysteine 228, cysteine 240–cysteine 246, and cysteine 267–cysteine 269. Serine 137 functions as the Nucleophile in the catalytic mechanism. Aspartate 165 serves as the catalytic Charge relay system. The Charge relay system role is filled by histidine 230.

This sequence belongs to the AB hydrolase superfamily. Lipase family. In terms of processing, is not glycosylated. In terms of tissue distribution, expressed by the venom gland.

The protein localises to the secreted. The catalysed reaction is a 1,2-diacyl-sn-glycero-3-phosphocholine + H2O = a 2-acyl-sn-glycero-3-phosphocholine + a fatty acid + H(+). Catalyzes the hydrolysis of phosphatidylcholine with phospholipase A1 activity. Shows hemolytic activity. The sequence is that of Phospholipase A1 VesT1.02 from Vespa tropica (Greater banded hornet).